Consider the following 312-residue polypeptide: Malate dehydrogenase (312 aa).

Residues 12-17 and Asp36 contribute to the NAD(+) site; that span reads GAGFTG. Arg87 and Arg93 together coordinate substrate. NAD(+)-binding positions include Asn100 and 123–125; that span reads LTN. Asn125 contacts substrate. Ser149 carries the phosphoserine modification. Arg156 lines the substrate pocket. Residue His180 is the Proton acceptor of the active site.

The protein belongs to the LDH/MDH superfamily. MDH type 3 family.

It catalyses the reaction (S)-malate + NAD(+) = oxaloacetate + NADH + H(+). Catalyzes the reversible oxidation of malate to oxaloacetate. This is Malate dehydrogenase from Bacillus cereus (strain ATCC 14579 / DSM 31 / CCUG 7414 / JCM 2152 / NBRC 15305 / NCIMB 9373 / NCTC 2599 / NRRL B-3711).